A 525-amino-acid chain; its full sequence is Glutamyl-tRNA(Gln) amidotransferase subunit A, mitochondrial (525 aa).

Residues lysine 76 and serine 168 each act as charge relay system in the active site. Catalysis depends on serine 192, which acts as the Acyl-ester intermediate.

The protein belongs to the amidase family. GatA subfamily. Subunit of the heterotrimeric GatCAB amidotransferase (AdT) complex, composed of A (QRSL1), B (GATB) and C (GATC) subunits.

Its subcellular location is the mitochondrion. It carries out the reaction L-glutamyl-tRNA(Gln) + L-glutamine + ATP + H2O = L-glutaminyl-tRNA(Gln) + L-glutamate + ADP + phosphate + H(+). In terms of biological role, allows the formation of correctly charged Gln-tRNA(Gln) through the transamidation of misacylated Glu-tRNA(Gln) in the mitochondria. The reaction takes place in the presence of glutamine and ATP through an activated gamma-phospho-Glu-tRNA(Gln). The chain is Glutamyl-tRNA(Gln) amidotransferase subunit A, mitochondrial (Qrsl1) from Mus musculus (Mouse).